The chain runs to 182 residues: Ribulose bisphosphate carboxylase small subunit, chloroplastic (182 aa).

A chloroplast-targeting transit peptide spans 1–58 (MACSMISSATVAAVSRASPAQSSMVAPFTCLKSTSAFPVTQKTNNDITSIASNGGRVQ).

Belongs to the RuBisCO small chain family. As to quaternary structure, heterohexadecamer of 8 large and 8 small subunits.

It is found in the plastid. Its subcellular location is the chloroplast. In terms of biological role, ruBisCO catalyzes two reactions: the carboxylation of D-ribulose 1,5-bisphosphate, the primary event in carbon dioxide fixation, as well as the oxidative fragmentation of the pentose substrate. Both reactions occur simultaneously and in competition at the same active site. Although the small subunit is not catalytic it is essential for maximal activity. In Betula pendula (European white birch), this protein is Ribulose bisphosphate carboxylase small subunit, chloroplastic.